The chain runs to 94 residues: uncharacterized protein (94 aa).

In terms of tissue distribution, expressed in heart.

This is an uncharacterized protein from Homo sapiens (Human).